We begin with the raw amino-acid sequence, 91 residues long: Parbolysin P6 (91 aa).

Cystine bridges form between C16–C37, C22–C33, and C47–C60.

It belongs to the worm cytolysin family. Localized within the skin and proboscis and are most readily isolated from body mucus secretions.

It is found in the secreted. Its function is as follows. Cytolysin that shows hemolytic activity (on bovine erythrocytes, HC(50)=5.75 mg/ml). This hemolytic activity is completely inhibited by small unilamelar vesicles composed of PC/PG, PC/PI and PC/PS in 1:1 molar ratios (with at least 100 mg/ml concentration). The sequence is that of Parbolysin P6 from Parborlasia corrugatus (Antarctic nemertean worm).